The following is an 86-amino-acid chain: Large ribosomal subunit protein uL23 (86 aa).

The protein belongs to the universal ribosomal protein uL23 family. Part of the 50S ribosomal subunit. Contacts protein L29.

Functionally, binds to 23S rRNA. One of the proteins that surrounds the polypeptide exit tunnel on the outside of the ribosome. This is Large ribosomal subunit protein uL23 from Pyrococcus horikoshii (strain ATCC 700860 / DSM 12428 / JCM 9974 / NBRC 100139 / OT-3).